A 1108-amino-acid polypeptide reads, in one-letter code: Probable E3 ubiquitin ligase SUD1 (1108 aa).

The segment at 1 to 60 (MEISPADSLSISGAAASEVVSEPSVSSSSSSSSPNQASPNPFSNMDPAVSTATGSRYVDD) is disordered. Residues 10–44 (SISGAAASEVVSEPSVSSSSSSSSPNQASPNPFSN) are compositionally biased toward low complexity. The RING-CH-type zinc finger occupies 60–121 (DDEDEEDVCR…EVCKHPFSFS (62 aa)). Cys-68, Cys-71, Cys-85, Cys-87, His-95, Cys-98, Cys-111, and Cys-114 together coordinate Zn(2+). 2 consecutive transmembrane segments (helical) span residues 157–177 (FVLS…WRLA) and 197–217 (VILT…FIFL). The span at 237–246 (ERDDDVDRNG) shows a compositional bias: basic and acidic residues. The interval 237–273 (ERDDDVDRNGARAARRPAGQANRNLAGEGNGEDAGDQ) is disordered. The stretch at 286–308 (ENVLARLDIQAARLEAQVEQMFD) forms a coiled coil. The next 8 membrane-spanning stretches (helical) occupy residues 339 to 359 (FTVL…PFTL), 362 to 382 (IILY…VAAS), 462 to 482 (AVGY…IALI), 489 to 509 (PLTV…PSLL), 525 to 545 (VAFL…WWLD), 572 to 592 (LVHW…VSLL), 630 to 650 (VLLS…LPVK), and 669 to 689 (PFTE…FIIE). A disordered region spans residues 762-784 (PNRSRLRAGNVNTGEEYEDDDEQ). Helical transmembrane passes span 796–816 (IILL…ALIV), 844–864 (YAFV…RYAI), 894–914 (AIWV…LVIV), 923–943 (SPVF…KIWT), 982–1002 (EIVF…YVLA), and 1017–1036 (SAVY…FCFC).

As to expression, expressed in cotyledons, leaves, roots, stems, inflorescences and siliques. Expression higher at the top than at the base of the stem.

The protein localises to the membrane. It catalyses the reaction S-ubiquitinyl-[E2 ubiquitin-conjugating enzyme]-L-cysteine + [acceptor protein]-L-lysine = [E2 ubiquitin-conjugating enzyme]-L-cysteine + N(6)-ubiquitinyl-[acceptor protein]-L-lysine.. It participates in protein modification; protein ubiquitination. In terms of biological role, probable E3 ubiquitin ligase acting as a positive post-transcriptional regulator of 3-hydroxy-3-methylglutaryl-coenzyme A reductase activity. Might be involved in the quality control that degrades misfolded proteins. The polypeptide is Probable E3 ubiquitin ligase SUD1 (SUD1) (Arabidopsis thaliana (Mouse-ear cress)).